A 1291-amino-acid chain; its full sequence is DNA-directed RNA polymerase subunit beta (1291 aa).

The protein belongs to the RNA polymerase beta chain family. As to quaternary structure, the RNAP catalytic core consists of 2 alpha, 1 beta, 1 beta' and 1 omega subunit. When a sigma factor is associated with the core the holoenzyme is formed, which can initiate transcription.

The catalysed reaction is RNA(n) + a ribonucleoside 5'-triphosphate = RNA(n+1) + diphosphate. Its function is as follows. DNA-dependent RNA polymerase catalyzes the transcription of DNA into RNA using the four ribonucleoside triphosphates as substrates. This is DNA-directed RNA polymerase subunit beta from Mycoplasma mycoides subsp. mycoides SC (strain CCUG 32753 / NCTC 10114 / PG1).